The primary structure comprises 597 residues: MATLSMQVSILSKQVKNLNSFGMRASKLPMVARRVDVSTTRLRPICSASLQVEEETRRSGNYQASIWDNAFIQSFNTNKYRDEKHLNRKEELIAQVKVLLNTKMEAVKQLELIDDLRNLGLTYYFQDEFKKILTCIYNDHKCFKNEQVGDLYFTSLGFRLLRLHGFDVSEDVFSFFKNEDGSDFKASLGENTKDVLQLYEASFPIRVGEVTLEQARVFSTKILEKKVDEGINDEKLLAWIQHSLALPLHWRIQRLEARWFLDAYAARKDMNPLIFELGKIDFHIIQETQLEEVQEVSRWWTNSNLAEKLPFVRDRIVECYFWALGLFEPHEYGYQRKMAAIIITFVTIIDDVYDVYGTLDELQLFTDAIRKWDLESISTLPYYMQVCYLALYTYASELAYDILKDQGFNSISYLQRSWLSLVEGFFQEAKWYYAGYTPTLAEYLENAKVSISSPTIISQVYFTLPNSNEGTVVENVYGYHNMLYLSGMILRLADDLGTTQFELKRGDVQKAIQCYMKDNNATEKEGQEHVKYLLREAWKEMNTAMADPDCPLSEDLVDAAANLGRASQFIYLEGDGHGVQHSEIHNQMGGLIFEPYV.

Residues methionine 1–serine 47 constitute a chloroplast transit peptide. Mn(2+) contacts are provided by aspartate 350 and aspartate 354. Positions aspartate 350–aspartate 354 match the DDXXD motif motif. Homodimerization stretches follow at residues tyrosine 356 to leucine 362 and glutamate 428 to proline 465. 2 residues coordinate Mn(2+): aspartate 494 and glutamate 502.

Belongs to the terpene synthase family. Homodimer. Mn(2+) serves as cofactor. It depends on Mg(2+) as a cofactor.

Its subcellular location is the plastid. The protein resides in the chloroplast. It catalyses the reaction (2E)-geranyl diphosphate = gamma-terpinene + diphosphate. The protein operates within secondary metabolite biosynthesis; terpenoid biosynthesis. In terms of biological role, involved in the biosynthesis of phenolic monoterpenes natural products thymol and carvacrol which have a broad range of biological activities acting as antimicrobial compounds, insecticides, antioxidants and pharmaceutical agents. Monoterpene synthase which catalyzes the conversion of geranyl diphosphate (GPP) to gamma-terpinene and minor amounts of other monoterpenes (e.g. alpha-thujene, alpha-terpinene, myrcene, sabinene, (+)-R-limonene, alpha-pinene and alpha-phellandrene). The protein is Gamma-terpinene synthase, chloroplastic of Thymus caespititius (Cretan thyme).